The sequence spans 449 residues: 5'-deoxyadenosine deaminase (449 aa).

Zn(2+) contacts are provided by His-79 and His-81. Substrate contacts are provided by Glu-108 and His-200. His-227 lines the Zn(2+) pocket. Substrate is bound by residues Glu-230 and Asp-316. Zn(2+) is bound at residue Asp-316.

The protein belongs to the metallo-dependent hydrolases superfamily. MTA/SAH deaminase family. Homotetramer. The cofactor is Zn(2+).

It carries out the reaction 5'-deoxyadenosine + H2O + H(+) = 5'-deoxyinosine + NH4(+). It catalyses the reaction S-adenosyl-L-homocysteine + H2O + H(+) = S-inosyl-L-homocysteine + NH4(+). The enzyme catalyses S-methyl-5'-thioadenosine + H2O + H(+) = S-methyl-5'-thioinosine + NH4(+). The catalysed reaction is adenosine + H2O + H(+) = inosine + NH4(+). It participates in amino-acid biosynthesis; S-adenosyl-L-methionine biosynthesis. Catalyzes the deamination of three SAM-derived enzymatic products, namely 5'-deoxyadenosine, S-adenosyl-L-homocysteine, and 5'-methylthioadenosine, to produce the inosine analogs. Can also deaminate adenosine. The preferred substrate for this enzyme is 5'-deoxyadenosine, but all these substrates are efficiently deaminated. Likely functions in a S-adenosyl-L-methionine (SAM) recycling pathway from S-adenosyl-L-homocysteine (SAH) produced from SAM-dependent methylation reactions. May also be involved in the recycling of 5'-deoxyadenosine, whereupon the 5'-deoxyribose moiety of 5'-deoxyinosine is further metabolized to deoxyhexoses used for the biosynthesis of aromatic amino acids in methanogens. The sequence is that of 5'-deoxyadenosine deaminase from Methanospirillum hungatei JF-1 (strain ATCC 27890 / DSM 864 / NBRC 100397 / JF-1).